We begin with the raw amino-acid sequence, 290 residues long: L-proline cis-3-hydroxylase 1 (290 aa).

Fe cation-binding residues include H107, D109, and H158. 2-oxoglutarate is bound at residue R168.

It belongs to the L-proline cis-4-/cis-3-hydroxylase family. Homodimer. It depends on Fe(2+) as a cofactor.

It carries out the reaction L-proline + 2-oxoglutarate + O2 = cis-3-hydroxy-L-proline + succinate + CO2. Inhibited by metal ions such as Co(2+), Zn(2+), Ni(2+) or Cu(2+). Is also inhibited by EDTA in vitro. Unlike the procollagen-proline cis-3- and trans-4-hydroxylases from mammals, does not necessarily require L-ascorbate for activity although it does increase the activity of the enzyme. Dioxygenase that catalyzes the 2-oxoglutarate-dependent selective hydroxylation of free L-proline to cis-3-hydroxy-L-proline (cis-3-Hyp). D-proline, trans-4-hydroxy-L-proline, cis-4-hydroxy-L-proline, cis-4-hydroxy-D-proline, and 3,4-dehydro-DL-proline are not substrates. The sequence is that of L-proline cis-3-hydroxylase 1 from Streptomyces sp.